Reading from the N-terminus, the 513-residue chain is GMP synthase [glutamine-hydrolyzing] (513 aa).

In terms of domain architecture, Glutamine amidotransferase type-1 spans 9–198 (LILVLDFGSQ…VRRVCNCTGE (190 aa)). Residue C86 is the Nucleophile of the active site. Catalysis depends on residues H172 and E174. Residues 199 to 388 (WTMENFIEIE…LGIPEHLVWR (190 aa)) form the GMPS ATP-PPase domain. ATP is bound at residue 226 to 232 (SGGVDSS).

As to quaternary structure, homodimer.

The enzyme catalyses XMP + L-glutamine + ATP + H2O = GMP + L-glutamate + AMP + diphosphate + 2 H(+). Its pathway is purine metabolism; GMP biosynthesis; GMP from XMP (L-Gln route): step 1/1. Functionally, catalyzes the synthesis of GMP from XMP. The protein is GMP synthase [glutamine-hydrolyzing] of Staphylococcus epidermidis (strain ATCC 35984 / DSM 28319 / BCRC 17069 / CCUG 31568 / BM 3577 / RP62A).